The chain runs to 503 residues: LEM domain-containing protein 2 (503 aa).

The residue at position 2 (Ala-2) is an N-acetylalanine. Residues 2–42 (AGLSDLELRRELQALGFQPGPITDTTRDVYRNKLRRLRGEA) form the LEM domain. Residues 42–74 (ARLRDEERLREEARPRGEERLREEARLREDAPL) are compositionally biased toward basic and acidic residues. Disordered stretches follow at residues 42-97 (ARLR…SGSA) and 127-157 (AQLR…GPGL). The interval 74-130 (LRARPAAASPRAEPWLSQPASGSAYATPGAYGDIRPSAASWVGSRGLAYPARPAQLR) is required for nuclear retention and interaction with LMNA isoform C. Residues 75–87 (RARPAAASPRAEP) are compositionally biased toward low complexity. Residues Ser-166 and Ser-175 each carry the phosphoserine modification. Positions 172-198 (LPSSLLGPDPRPGLRATRAGPAGAARA) are disordered. Positions 184-197 (GLRATRAGPAGAAR) are enriched in low complexity. A run of 2 helical transmembrane segments spans residues 213–233 (LLLW…WVKM) and 377–397 (VTNV…LILL). A winged-Helix (WH) region spans residues 395 to 503 (ILLKYRWRKL…KPSSFSDSER (109 aa)). Residues Ser-497, Ser-499, and Ser-501 each carry the phosphoserine modification.

Interacts (via N-terminus) with LMNA isoform C (via C-terminus) (in vitro). Interacts (via LEM domain) with BANF1. Interacts (via C-terminus) with CHMP7. Interacts (via N-terminus) with tubulin; the interaction causes microtubule bundling and stabilization (in vitro). Phosphorylated; strongly phosphorylated in mitosis compared to G1/S. In terms of tissue distribution, ubiquitously expressed, including bone marrow, brain, kidney, colon, skeletal muscle, thymus, testis and uterus.

It localises to the nucleus inner membrane. It is found in the nucleus envelope. The protein resides in the cytoplasm. Its subcellular location is the cytoskeleton. The protein localises to the spindle. Nuclear lamina-associated inner nuclear membrane protein that is involved in nuclear structure organization, maintenance of nuclear envelope (NE) integrity and NE reformation after mitosis. Plays a role as transmembrane adapter for the endosomal sorting complexes required for transport (ESCRT), and is thereby involved in ESCRT-mediated NE reformation. Promotes ESCRT-mediated NE closure by recruiting CHMP7 and downstream ESCRT-III proteins IST1/CHMP8 and CHMP2A to the reforming NE during anaphase. During nuclear reassembly, condenses into a liquid-like coating around microtubule spindles and coassembles with CHMP7 to form a macromolecular O-ring seal at the confluence between membranes, chromatin, and the spindle to facilitate early nuclear sealing. Plays a role in the organization of heterochromatin associated with the NE and in the maintenance of NE organization under mechanical stress. Required for embryonic development and involved in regulation of several signaling pathways such as MAPK and AKT. Required for myoblast differentiation involving regulation of ERK signaling. Essential for cardiac homeostasis and proper heart function. This chain is LEM domain-containing protein 2 (LEMD2), found in Homo sapiens (Human).